The chain runs to 282 residues: Parvulin-like PPIase (282 aa).

Residues 1 to 20 (MKKLSVIFLSVSMLSGIAFA) form the signal peptide. In terms of domain architecture, PpiC spans 138 to 231 (KEQIKVAHIL…FGWHIIKVLE (94 aa)).

The protein belongs to the PpiC/parvulin rotamase family.

It localises to the cell outer membrane. The enzyme catalyses [protein]-peptidylproline (omega=180) = [protein]-peptidylproline (omega=0). The polypeptide is Parvulin-like PPIase (plp) (Rickettsia conorii (strain ATCC VR-613 / Malish 7)).